The sequence spans 30 residues: Cycloviolin-D (30 aa).

Residues 1–30 (GFPCGESCVFIPCISAAIGCSCKNKVCYRN) constitute a cross-link (cyclopeptide (Gly-Asn)). 3 cysteine pairs are disulfide-bonded: C4–C20, C8–C22, and C13–C27.

This is a cyclic peptide.

In terms of biological role, probably participates in a plant defense mechanism. Has anti-HIV activity. The protein is Cycloviolin-D of Leonia cymosa (Sacha uba).